The sequence spans 572 residues: Urease subunit alpha (572 aa).

The region spanning 136-572 (GGIDTHIHWI…VPLAQRYFLF (437 aa)) is the Urease domain. Residues H141, H143, and K224 each coordinate Ni(2+). N6-carboxylysine is present on K224. Position 226 (H226) interacts with substrate. H253 and H279 together coordinate Ni(2+). H327 serves as the catalytic Proton donor. D367 is a Ni(2+) binding site.

The protein belongs to the metallo-dependent hydrolases superfamily. Urease alpha subunit family. In terms of assembly, heterotrimer of UreA (gamma), UreB (beta) and UreC (alpha) subunits. Three heterotrimers associate to form the active enzyme. Ni cation is required as a cofactor. In terms of processing, carboxylation allows a single lysine to coordinate two nickel ions.

The protein resides in the cytoplasm. It catalyses the reaction urea + 2 H2O + H(+) = hydrogencarbonate + 2 NH4(+). Its pathway is nitrogen metabolism; urea degradation; CO(2) and NH(3) from urea (urease route): step 1/1. The protein is Urease subunit alpha of Actinobacillus pleuropneumoniae (Haemophilus pleuropneumoniae).